Here is a 479-residue protein sequence, read N- to C-terminus: Long-chain acyl-protein thioester reductase (479 aa).

The protein belongs to the LuxC family.

The catalysed reaction is a long-chain fatty aldehyde + NADP(+) + CoA = a long-chain fatty acyl-CoA + NADPH + H(+). Its pathway is lipid metabolism; fatty acid reduction for biolumincescence. Its function is as follows. LuxC is the fatty acid reductase enzyme responsible for synthesis of the aldehyde substrate for the luminescent reaction catalyzed by luciferase. In Aliivibrio fischeri (Vibrio fischeri), this protein is Long-chain acyl-protein thioester reductase (luxC).